We begin with the raw amino-acid sequence, 300 residues long: tRNA pseudouridine synthase B (300 aa).

The Nucleophile role is filled by aspartate 38.

The protein belongs to the pseudouridine synthase TruB family. Type 1 subfamily.

It carries out the reaction uridine(55) in tRNA = pseudouridine(55) in tRNA. Functionally, responsible for synthesis of pseudouridine from uracil-55 in the psi GC loop of transfer RNAs. This Dehalococcoides mccartyi (strain ATCC BAA-2100 / JCM 16839 / KCTC 5957 / BAV1) protein is tRNA pseudouridine synthase B.